The primary structure comprises 306 residues: MEPLELEGFLNLLKPPGMTSHDVVAKARRLLKEKRIGHLGTLDPDAAGVLPIAIGQATRLIELVAGVDKAYRTQLRLGAVTDSQDASGRIVKTGAVPALSRDDWEETLRPFRGQILQTPPMVSAVSVGGKRLYEYARQGIEVERSARPVSISRIEIVHYDPATPEEIVIDVECSAGTYIRTLCHDIGQRLGCGGHMGWLIRTRSGLFSLRDSLTLESLAEGPPKEQIVTPFEALAHLPALEIGENRLAALSRGLAQYLQGDGWSEGQWIRMHRRQKLLAVGQAIRKDEQWLCQPRKVFTRLETRSK.

The Nucleophile role is filled by D43.

This sequence belongs to the pseudouridine synthase TruB family. Type 1 subfamily.

The catalysed reaction is uridine(55) in tRNA = pseudouridine(55) in tRNA. Functionally, responsible for synthesis of pseudouridine from uracil-55 in the psi GC loop of transfer RNAs. The sequence is that of tRNA pseudouridine synthase B from Heliobacterium modesticaldum (strain ATCC 51547 / Ice1).